The chain runs to 87 residues: Phytosulfokines 2 (87 aa).

The first 22 residues, 1 to 22 (MANVSALLTIALLLCSTLMCTA), serve as a signal peptide directing secretion. The propeptide occupies 23–77 (RPEPAISISITTAADPCNMEKKIEGKLDDMHMVDENCGADDEDCLMRRTLVAHTD). Tyrosine 78 and tyrosine 80 each carry sulfotyrosine. A propeptide spanning residues 83 to 87 (KKKHP) is cleaved from the precursor.

The protein belongs to the phytosulfokine family. In terms of processing, sulfation is important for activity and for the binding to a putative membrane receptor. PSK-beta is an enzymatic derivative of PSK-alpha. Expressed in stems, roots and leaves.

It is found in the secreted. Promotes plant cell differentiation, organogenesis and somatic embryogenesis as well as cell proliferation. In Arabidopsis thaliana (Mouse-ear cress), this protein is Phytosulfokines 2 (PSK2).